The primary structure comprises 83 residues: Conotoxin Pu6.1 (83 aa).

Positions 1 to 19 are cleaved as a signal peptide; the sequence is MKLVLAIVLILMLVSLSTG. The propeptide occupies 20 to 42; sequence AEESGQEISMVGPPLYIWDPIPP. Intrachain disulfides connect Cys-43–Cys-57, Cys-50–Cys-62, and Cys-56–Cys-78.

The protein belongs to the conotoxin I3 superfamily. In terms of tissue distribution, expressed by the venom duct.

It is found in the secreted. The sequence is that of Conotoxin Pu6.1 from Conus pulicarius (Flea-bitten cone).